The following is a 419-amino-acid chain: MHKLIIHGGTPLKGSINISGAKNAVLPIMAASILTDKLHITNVPKLTDVSTMKDLLRSHGADIEIIEHQDEFELIIDTKNINNFTADYEIVRKMRASIWVLGPLLTKYGKAKVSLPGGCAIGARQVDLHIAVLKAMGAEIEIEDGYINASSKGRLKGTHFVFDKVSVGATINAILAAVLAEGETVLFNCGREPEIVDLCNCLITMGADIAGIGTSEITIKGKDSLNKASYKVLSDRIEAGTYMFAAAITKGDVKICRIDYHIVKNIALKLIETGIKVVPINNGVQVTYEGKLNSVDLETNPYPGFATDLQAQFMSLMTLSSGVSMITENIFENRFMHVPELCRMGADIVVRGNKAVVRGVEMLKGAEVMASDLRASVSLILAGLSTSSKTVLHRIYHLDRGFQDLEKKLSNCGADIKRV.

Residue 22 to 23 (KN) coordinates phosphoenolpyruvate. R95 serves as a coordination point for UDP-N-acetyl-alpha-D-glucosamine. C119 acts as the Proton donor in catalysis. Residue C119 is modified to 2-(S-cysteinyl)pyruvic acid O-phosphothioketal. UDP-N-acetyl-alpha-D-glucosamine-binding positions include 164 to 167 (KVSV), D308, and I330.

It belongs to the EPSP synthase family. MurA subfamily.

Its subcellular location is the cytoplasm. The enzyme catalyses phosphoenolpyruvate + UDP-N-acetyl-alpha-D-glucosamine = UDP-N-acetyl-3-O-(1-carboxyvinyl)-alpha-D-glucosamine + phosphate. It participates in cell wall biogenesis; peptidoglycan biosynthesis. Its function is as follows. Cell wall formation. Adds enolpyruvyl to UDP-N-acetylglucosamine. This is UDP-N-acetylglucosamine 1-carboxyvinyltransferase from Rickettsia africae (strain ESF-5).